Here is a 474-residue protein sequence, read N- to C-terminus: Probable periplasmic serine endoprotease DegP-like (474 aa).

The signal sequence occupies residues 1-26; that stretch reads MTRMTRHLALWMLLSLAILASQSAMA. Residues His116, Asp146, and Ser219 each act as charge relay system in the active site. Substrate contacts are provided by residues 217–219 and 274–278; these read GNS and LGVMI. PDZ domains lie at 263-354 and 360-462; these read LRND…LRNG and TVTV…YRSG.

The protein belongs to the peptidase S1C family.

Its subcellular location is the periplasm. The enzyme catalyses Acts on substrates that are at least partially unfolded. The cleavage site P1 residue is normally between a pair of hydrophobic residues, such as Val-|-Val.. In terms of biological role, might be efficient in the degradation of transiently denatured and unfolded proteins which accumulate in the periplasm following stress conditions. This is Probable periplasmic serine endoprotease DegP-like (mucD) from Halomonas elongata (strain ATCC 33173 / DSM 2581 / NBRC 15536 / NCIMB 2198 / 1H9).